A 416-amino-acid polypeptide reads, in one-letter code: Imidazolonepropionase (416 aa).

Fe(3+) contacts are provided by His81 and His83. Residues His81 and His83 each contribute to the Zn(2+) site. 4-imidazolone-5-propanoate-binding residues include Arg90, Tyr153, and His186. Residue Tyr153 participates in N-formimidoyl-L-glutamate binding. Residue His251 coordinates Fe(3+). His251 contributes to the Zn(2+) binding site. Gln254 contacts 4-imidazolone-5-propanoate. Asp326 is a binding site for Fe(3+). Asp326 serves as a coordination point for Zn(2+). Positions 328 and 330 each coordinate N-formimidoyl-L-glutamate. Thr331 is a 4-imidazolone-5-propanoate binding site.

It belongs to the metallo-dependent hydrolases superfamily. HutI family. Zn(2+) serves as cofactor. Fe(3+) is required as a cofactor.

Its subcellular location is the cytoplasm. It catalyses the reaction 4-imidazolone-5-propanoate + H2O = N-formimidoyl-L-glutamate. It participates in amino-acid degradation; L-histidine degradation into L-glutamate; N-formimidoyl-L-glutamate from L-histidine: step 3/3. In terms of biological role, catalyzes the hydrolytic cleavage of the carbon-nitrogen bond in imidazolone-5-propanoate to yield N-formimidoyl-L-glutamate. It is the third step in the universal histidine degradation pathway. In Paracidovorax citrulli (strain AAC00-1) (Acidovorax citrulli), this protein is Imidazolonepropionase.